The sequence spans 241 residues: Small ribosomal subunit protein uS3 (241 aa).

The KH type-2 domain occupies isoleucine 39 to arginine 107. The disordered stretch occupies residues alanine 214–alanine 241.

The protein belongs to the universal ribosomal protein uS3 family. In terms of assembly, part of the 30S ribosomal subunit. Forms a tight complex with proteins S10 and S14.

In terms of biological role, binds the lower part of the 30S subunit head. Binds mRNA in the 70S ribosome, positioning it for translation. The chain is Small ribosomal subunit protein uS3 from Mesorhizobium japonicum (strain LMG 29417 / CECT 9101 / MAFF 303099) (Mesorhizobium loti (strain MAFF 303099)).